The primary structure comprises 233 residues: Putative quercetin 2,3-dioxygenase PM1685 (233 aa).

A divalent metal cation contacts are provided by His-59, His-61, His-103, and Glu-105.

It belongs to the pirin family. Requires a divalent metal cation as cofactor.

It carries out the reaction quercetin + O2 = 2-(3,4-dihydroxybenzoyloxy)-4,6-dihydroxybenzoate + CO. The protein operates within flavonoid metabolism; quercetin degradation. Putative quercetin 2,3-dioxygenase. This Pasteurella multocida (strain Pm70) protein is Putative quercetin 2,3-dioxygenase PM1685.